The chain runs to 205 residues: Heme-binding protein 2 (205 aa).

A disordered region spans residues 1-39 (MAEPLQPDPGAAEDAAAQAVETPGWKAPEDAGPQPGSYE). A2 bears the N-acetylalanine mark. S181 carries the phosphoserine modification.

Belongs to the HEBP family. In terms of assembly, monomer. Interacts with LRPPRC. May interact with BCL2L1; an interaction with BCL2L1 was observed using a peptide, but not with the full-length protein. The full-length protein would have to undergo a major conformation change for the interaction to occur. Interacts with PDCD6. As to expression, detected in placenta.

It localises to the cytoplasm. It is found in the mitochondrion. Can promote mitochondrial permeability transition and facilitate necrotic cell death under different types of stress conditions. This Homo sapiens (Human) protein is Heme-binding protein 2 (HEBP2).